Consider the following 163-residue polypeptide: NADH-quinone oxidoreductase subunit I (163 aa).

4Fe-4S ferredoxin-type domains lie at 53–83 and 94–123; these read LRRY…IEAG and VRYD…EGPN. C63, C66, C69, C73, C103, C106, C109, and C113 together coordinate [4Fe-4S] cluster.

This sequence belongs to the complex I 23 kDa subunit family. In terms of assembly, NDH-1 is composed of 14 different subunits. Subunits NuoA, H, J, K, L, M, N constitute the membrane sector of the complex. [4Fe-4S] cluster is required as a cofactor.

The protein resides in the cell inner membrane. The enzyme catalyses a quinone + NADH + 5 H(+)(in) = a quinol + NAD(+) + 4 H(+)(out). Functionally, NDH-1 shuttles electrons from NADH, via FMN and iron-sulfur (Fe-S) centers, to quinones in the respiratory chain. The immediate electron acceptor for the enzyme in this species is believed to be ubiquinone. Couples the redox reaction to proton translocation (for every two electrons transferred, four hydrogen ions are translocated across the cytoplasmic membrane), and thus conserves the redox energy in a proton gradient. The chain is NADH-quinone oxidoreductase subunit I from Bartonella quintana (strain Toulouse) (Rochalimaea quintana).